Consider the following 122-residue polypeptide: Large ribosomal subunit protein bL12 (122 aa).

The protein belongs to the bacterial ribosomal protein bL12 family. In terms of assembly, homodimer. Part of the ribosomal stalk of the 50S ribosomal subunit. Forms a multimeric L10(L12)X complex, where L10 forms an elongated spine to which 2 to 4 L12 dimers bind in a sequential fashion. Binds GTP-bound translation factors.

Its function is as follows. Forms part of the ribosomal stalk which helps the ribosome interact with GTP-bound translation factors. Is thus essential for accurate translation. The protein is Large ribosomal subunit protein bL12 of Streptococcus mutans serotype c (strain ATCC 700610 / UA159).